A 176-amino-acid polypeptide reads, in one-letter code: Glutathione-regulated potassium-efflux system ancillary protein KefF (176 aa).

Residues His-8, 14–17 (SHAN), 65–68 (MQWY), and 105–108 (TTGG) each bind FMN.

Belongs to the NAD(P)H dehydrogenase (quinone) family. KefF subfamily. In terms of assembly, homodimer. Interacts with KefC. It depends on FMN as a cofactor.

Its subcellular location is the cell inner membrane. The catalysed reaction is a quinone + NADH + H(+) = a quinol + NAD(+). The enzyme catalyses a quinone + NADPH + H(+) = a quinol + NADP(+). In terms of biological role, regulatory subunit of a potassium efflux system that confers protection against electrophiles. Required for full activity of KefC. Shows redox enzymatic activity, but this enzymatic activity is not required for activation of KefC. This Salmonella dublin (strain CT_02021853) protein is Glutathione-regulated potassium-efflux system ancillary protein KefF.